We begin with the raw amino-acid sequence, 1642 residues long: Coiled-coil domain-containing protein 7A (1642 aa).

Residues 21 to 51 (PYKKGLLNSSPKPKEKHNAKSKYGKNESMVL) are disordered. The LRR 1 repeat unit spans residues 161–184 (VNQMEEISKDQSNLEELQSDGKTA). Residues 279 to 330 (LEKALNDQQTIESKYKQLETDFQMLIMEKTLLEAEIRRLREIERVKSAAKEE) are a coiled coil. The stretch at 1310 to 1333 (IKELSKTLNLDGGDIELSDFVFKT) is one LRR 2 repeat.

In terms of tissue distribution, exclusively expressed in the testes.

The protein is Coiled-coil domain-containing protein 7A of Mus musculus (Mouse).